Consider the following 192-residue polypeptide: Small ribosomal subunit protein eS7 (192 aa).

The protein belongs to the eukaryotic ribosomal protein eS7 family.

The protein is Small ribosomal subunit protein eS7 (RPS7) of Secale cereale (Rye).